The primary structure comprises 316 residues: Deoxyribonuclease-1-like 1 (316 aa).

Positions 1–28 are cleaved as a signal peptide; sequence MHSSGGFQKAIHGHALLLLLLLASGAET. Residues Glu-107 and His-158 contribute to the active site. Cys-197 and Cys-234 are joined by a disulfide. Asn-271 carries an N-linked (GlcNAc...) asparagine glycan.

This sequence belongs to the DNase I family.

It is found in the endoplasmic reticulum. The protein is Deoxyribonuclease-1-like 1 (DNASE1L1) of Bos taurus (Bovine).